The following is a 421-amino-acid chain: Serine--tRNA ligase (421 aa).

225–227 provides a ligand contact to L-serine; the sequence is TAE. ATP is bound by residues 256–258 and Val-272; that span reads RSE. Glu-279 lines the L-serine pocket. 345-348 lines the ATP pocket; sequence ETHS. Thr-380 contacts L-serine.

It belongs to the class-II aminoacyl-tRNA synthetase family. Type-1 seryl-tRNA synthetase subfamily. As to quaternary structure, homodimer. A single tRNA molecule binds across the dimer.

The protein localises to the cytoplasm. It carries out the reaction tRNA(Ser) + L-serine + ATP = L-seryl-tRNA(Ser) + AMP + diphosphate + H(+). The catalysed reaction is tRNA(Sec) + L-serine + ATP = L-seryl-tRNA(Sec) + AMP + diphosphate + H(+). The protein operates within aminoacyl-tRNA biosynthesis; selenocysteinyl-tRNA(Sec) biosynthesis; L-seryl-tRNA(Sec) from L-serine and tRNA(Sec): step 1/1. In terms of biological role, catalyzes the attachment of serine to tRNA(Ser). Is also probably able to aminoacylate tRNA(Sec) with serine, to form the misacylated tRNA L-seryl-tRNA(Sec), which will be further converted into selenocysteinyl-tRNA(Sec). The polypeptide is Serine--tRNA ligase (serS) (Thermus thermophilus (strain ATCC BAA-163 / DSM 7039 / HB27)).